Reading from the N-terminus, the 228-residue chain is Endolytic peptidoglycan transglycosylase RlpA (228 aa).

Residues 1 to 23 (MIQRHKLIVLIFLLIFCLSGCNT) form the signal peptide.

Belongs to the RlpA family.

Lytic transglycosylase with a strong preference for naked glycan strands that lack stem peptides. In Rickettsia felis (strain ATCC VR-1525 / URRWXCal2) (Rickettsia azadi), this protein is Endolytic peptidoglycan transglycosylase RlpA.